A 364-amino-acid chain; its full sequence is DNA replication and repair protein RecF (364 aa).

30–37 is an ATP binding site; sequence GRNAQGKT.

It belongs to the RecF family.

The protein localises to the cytoplasm. Its function is as follows. The RecF protein is involved in DNA metabolism; it is required for DNA replication and normal SOS inducibility. RecF binds preferentially to single-stranded, linear DNA. It also seems to bind ATP. The protein is DNA replication and repair protein RecF of Pelotomaculum thermopropionicum (strain DSM 13744 / JCM 10971 / SI).